The sequence spans 419 residues: Carbohydrate sulfotransferase 12 (419 aa).

The Cytoplasmic portion of the chain corresponds to 1 to 5; that stretch reads MTKPR. A helical; Signal-anchor for type II membrane protein transmembrane segment spans residues 6–26; sequence LFRLWLVLGSALMILLIIVYW. The Lumenal portion of the chain corresponds to 27–419; sequence DNVGTAHFYL…YPKPENLLRD (393 aa). The span at 78–87 shows a compositional bias: basic and acidic residues; the sequence is HNDLSRRKTE. The disordered stretch occupies residues 78 to 99; sequence HNDLSRRKTEQPPVPAPSKPVL. N139 carries N-linked (GlcNAc...) asparagine glycosylation. 176 to 182 lines the 3'-phosphoadenylyl sulfate pocket; sequence PKVACTN. N214 carries an N-linked (GlcNAc...) asparagine glycan. Residue 250–258 coordinates 3'-phosphoadenylyl sulfate; that stretch reads RDPFVRLIS. N-linked (GlcNAc...) asparagine glycans are attached at residues N285 and N375.

Belongs to the sulfotransferase 2 family.

The protein resides in the golgi apparatus membrane. It catalyses the reaction chondroitin beta-D-glucuronate + n 3'-phosphoadenylyl sulfate = chondroitin 4'-sulfate + n adenosine 3',5'-bisphosphate + n H(+). In terms of biological role, catalyzes the transfer of sulfate to position 4 of the N-acetylgalactosamine (GalNAc) residue of chondroitin and desulfated dermatan sulfate. Chondroitin sulfate constitutes the predominant proteoglycan present in cartilage and is distributed on the surfaces of many cells and extracellular matrices. Activity toward partially desulfated dermatan sulfate is however lower. Does not form 4, 6-di-O-sulfated GalNAc when chondroitin sulfate C is used as an acceptor. This chain is Carbohydrate sulfotransferase 12 (Chst12), found in Mus musculus (Mouse).